A 98-amino-acid chain; its full sequence is Protein S100-A13 (98 aa).

An EF-hand domain is found at 18-53 (TTFFTFAGREGRKGSLSVNEFKELVTQQLPHLLKDV). Positions 32, 37, 64, 66, 68, 70, and 75 each coordinate Ca(2+). Ser-32 carries the post-translational modification Phosphoserine.

Belongs to the S-100 family. In terms of assembly, homodimer. Part of a copper-dependent multiprotein complex containing S100A13, FGF1 and SYT1. Interacts with FGF1 and SYT1. Interacts with IL1A.

It localises to the cytoplasm. Its subcellular location is the secreted. Its function is as follows. Plays a role in the export of proteins that lack a signal peptide and are secreted by an alternative pathway. Binds two calcium ions per subunit. Binds one copper ion. Binding of one copper ion does not interfere with calcium binding. Required for the copper-dependent stress-induced export of IL1A and FGF1. The calcium-free protein binds to lipid vesicles containing phosphatidylserine, but not to vesicles containing phosphatidylcholine. This chain is Protein S100-A13 (S100A13), found in Bos taurus (Bovine).